We begin with the raw amino-acid sequence, 60 residues long: Cytotoxin 1 (60 aa).

Cystine bridges form between Cys3–Cys21, Cys14–Cys38, Cys42–Cys53, and Cys54–Cys59.

The protein belongs to the three-finger toxin family. Short-chain subfamily. Type IA cytotoxin sub-subfamily. As to quaternary structure, monomer, or heterodimer with alpha-cobratoxin (AC P01391); disulfide-linked. Expressed by the venom gland.

Its subcellular location is the secreted. The protein resides in the target cell membrane. Monomer: shows cytolytic activity (apoptosis is induced in C2C12 cells, but no cytotoxicity is observed on INS-1E). In addition, this toxin shows insulinotropic activity that may be mediated by the modulation of potassium channels (Kv). It induces the increase of intracellular calcium release. It induces insulin secretion from rat INS-1E cells in absence and in presence of glucose, without affecting cell viability and integrity. In presence of glucose, the insulinotropic activity is increased, suggesting a possible synergistic effect with glucose. Its insulinotropic activity does not involve GLP-1R signaling. In terms of biological role, heterodimer: has no cytolytic activity, but retains most of the alpha-cobratoxin capacity to compete with alpha-bungarotoxin for binding to Torpedo and alpha-7/CHRNA7 nicotinic acetylcholine receptors (nAChRs) as well as to Lymnea stagnalis acetylcholine-binding protein. This chain is Cytotoxin 1, found in Naja kaouthia (Monocled cobra).